The sequence spans 211 residues: Mediator of RNA polymerase II transcription subunit 20 (211 aa).

Belongs to the Mediator complex subunit 20 family. In terms of assembly, component of the Mediator complex.

The protein resides in the nucleus. Component of the Mediator complex, a coactivator involved in the regulated transcription of nearly all RNA polymerase II-dependent genes. Mediator functions as a bridge to convey information from gene-specific regulatory proteins to the basal RNA polymerase II transcription machinery. Mediator is recruited to promoters by direct interactions with regulatory proteins and serves as a scaffold for the assembly of a functional preinitiation complex with RNA polymerase II and the general transcription factors. This Gallus gallus (Chicken) protein is Mediator of RNA polymerase II transcription subunit 20 (MED20).